Here is a 402-residue protein sequence, read N- to C-terminus: Phosphoglycerate kinase (402 aa).

Substrate contacts are provided by residues 24-26, Arg-40, 63-66, Arg-122, and Arg-155; these read DFN and HFGR. ATP is bound by residues Lys-206, Gly-297, Glu-328, and 357–360; that span reads GGDS.

The protein belongs to the phosphoglycerate kinase family. In terms of assembly, monomer.

It is found in the cytoplasm. The enzyme catalyses (2R)-3-phosphoglycerate + ATP = (2R)-3-phospho-glyceroyl phosphate + ADP. Its pathway is carbohydrate degradation; glycolysis; pyruvate from D-glyceraldehyde 3-phosphate: step 2/5. The chain is Phosphoglycerate kinase from Parasynechococcus marenigrum (strain WH8102).